A 2505-amino-acid chain; its full sequence is Fatty acid synthase (2505 aa).

Methionine 1 bears the N-acetylmethionine mark. The Ketosynthase family 3 (KS3) domain maps to 1 to 406 (MEEVVIAGMS…GANVHVILQP (406 aa)). Lysine 59 carries the N6-acetyllysine modification. Serine 63 is modified (phosphoserine). Lysine 70 carries the post-translational modification N6-acetyllysine. Cysteine 161 functions as the For beta-ketoacyl synthase activity in the catalytic mechanism. The residue at position 207 (serine 207) is a Phosphoserine. Histidine 293 functions as the For beta-ketoacyl synthase activity in the catalytic mechanism. Lysine 298 carries the post-translational modification N6-acetyllysine. The For beta-ketoacyl synthase activity role is filled by histidine 331. The acyl and malonyl transferases stretch occupies residues 429–817 (RTMEAVQGLL…IDINPNALFP (389 aa)). The residue at position 528 (lysine 528) is an N6-acetyllysine. Catalysis depends on serine 581, which acts as the For malonyltransferase activity. Residues 647–648 (DT) and phenylalanine 671 contribute to the an acyl-CoA site. Lysine 673 bears the N6-acetyllysine mark. Phosphoserine is present on serine 725. Residue arginine 773 coordinates an acyl-CoA. Position 790 is an N6-acetyllysine (lysine 790). An N-terminal hotdog fold region spans residues 844-966 (IPVAEDFPNG…KVYQWEDPDS (123 aa)). Residues 844 to 1112 (IPVAEDFPNG…TSRRQQEQLV (269 aa)) form the PKS/mFAS DH domain. Histidine 878 acts as the Proton acceptor; for dehydratase activity in catalysis. The C-terminal hotdog fold stretch occupies residues 983–1112 (VSRLTQGEVY…TSRRQQEQLV (130 aa)). Lysine 993 bears the N6-acetyllysine mark. Aspartate 1032 serves as the catalytic Proton donor; for dehydratase activity. Lysine 1276 bears the N6-acetyllysine mark. At cysteine 1464 the chain carries S-nitrosocysteine. Serine 1578 and serine 1588 each carry phosphoserine. The segment at 1629–1857 (DVPSSWTLEE…VQVREEEPEA (229 aa)) is enoyl reductase. An NADP(+)-binding site is contributed by 1665 to 1682 (VLIHSGSGGVGQAAISIA). The residue at position 1698 (lysine 1698) is an N6-(pyridoxal phosphate)lysine; alternate. An N6-acetyllysine; alternate modification is found at lysine 1698. Residues lysine 1765, lysine 1841, and lysine 1989 each carry the N6-acetyllysine modification. 1765–1780 (KFDLSNNHPLGMAIFL) serves as a coordination point for NADP(+). A beta-ketoacyl reductase region spans residues 1858 to 2113 (MLPGAQPTLI…VLAEKKAVAH (256 aa)). An S-nitrosocysteine modification is found at cysteine 2085. Residues 2113 to 2193 (HGDGEAQRDL…EMSSKAGSDT (81 aa)) enclose the Carrier domain. Serine 2151 is modified (O-(pantetheine 4'-phosphoryl)serine; alternate). Serine 2151 bears the Phosphoserine; alternate mark. Residues serine 2191 and serine 2230 each carry the phosphoserine modification. The tract at residues 2202-2505 (NDTSLKQAQL…AEPRVSVREG (304 aa)) is thioesterase. The active-site For thioesterase activity is the serine 2302. Lysine 2385 is modified (N6-acetyllysine). Lysine 2443 participates in a covalent cross-link: Glycyl lysine isopeptide (Lys-Gly) (interchain with G-Cter in SUMO2). The active-site For thioesterase activity is the histidine 2475.

As to quaternary structure, homodimer which is arranged in a head to tail fashion. Interacts with CEACAM1; this interaction is insulin and phosphorylation-dependent; reduces fatty-acid synthase activity. In terms of processing, S-nitrosylation of Fatty acid synthase at cysteine residues Cys-1464 or Cys-2085 is important for the enzyme dimerization. In adipocytes, S-nitrosylation of Fatty acid synthase occurs under physiological conditions and gradually increases during adipogenesis.

It localises to the cytoplasm. Its subcellular location is the melanosome. The enzyme catalyses acetyl-CoA + n malonyl-CoA + 2n NADPH + 2n H(+) = a long-chain fatty acid + (n+1) CoA + n CO2 + 2n NADP(+).. The catalysed reaction is holo-[ACP] + acetyl-CoA = acetyl-[ACP] + CoA. It carries out the reaction holo-[ACP] + malonyl-CoA = malonyl-[ACP] + CoA. It catalyses the reaction a fatty acyl-[ACP] + malonyl-[ACP] + H(+) = a 3-oxoacyl-[ACP] + holo-[ACP] + CO2. The enzyme catalyses a (3R)-hydroxyacyl-[ACP] + NADP(+) = a 3-oxoacyl-[ACP] + NADPH + H(+). The catalysed reaction is a (3R)-hydroxyacyl-[ACP] = a (2E)-enoyl-[ACP] + H2O. It carries out the reaction a 2,3-saturated acyl-[ACP] + NADP(+) = a (2E)-enoyl-[ACP] + NADPH + H(+). It catalyses the reaction hexadecanoyl-[ACP] + H2O = hexadecanoate + holo-[ACP] + H(+). The enzyme catalyses acetyl-[ACP] + malonyl-[ACP] + H(+) = 3-oxobutanoyl-[ACP] + holo-[ACP] + CO2. The catalysed reaction is 3-oxobutanoyl-[ACP] + NADPH + H(+) = (3R)-hydroxybutanoyl-[ACP] + NADP(+). It carries out the reaction (3R)-hydroxybutanoyl-[ACP] = (2E)-butenoyl-[ACP] + H2O. It catalyses the reaction (2E)-butenoyl-[ACP] + NADPH + H(+) = butanoyl-[ACP] + NADP(+). The enzyme catalyses butanoyl-[ACP] + malonyl-[ACP] + H(+) = 3-oxohexanoyl-[ACP] + holo-[ACP] + CO2. The catalysed reaction is 3-oxohexanoyl-[ACP] + NADPH + H(+) = (3R)-hydroxyhexanoyl-[ACP] + NADP(+). It carries out the reaction (3R)-hydroxyhexanoyl-[ACP] = (2E)-hexenoyl-[ACP] + H2O. It catalyses the reaction (2E)-hexenoyl-[ACP] + NADPH + H(+) = hexanoyl-[ACP] + NADP(+). The enzyme catalyses hexanoyl-[ACP] + malonyl-[ACP] + H(+) = 3-oxooctanoyl-[ACP] + holo-[ACP] + CO2. The catalysed reaction is 3-oxooctanoyl-[ACP] + NADPH + H(+) = (3R)-hydroxyoctanoyl-[ACP] + NADP(+). It carries out the reaction (3R)-hydroxyoctanoyl-[ACP] = (2E)-octenoyl-[ACP] + H2O. It catalyses the reaction (2E)-octenoyl-[ACP] + NADPH + H(+) = octanoyl-[ACP] + NADP(+). The enzyme catalyses octanoyl-[ACP] + malonyl-[ACP] + H(+) = 3-oxodecanoyl-[ACP] + holo-[ACP] + CO2. The catalysed reaction is 3-oxodecanoyl-[ACP] + NADPH + H(+) = (3R)-hydroxydecanoyl-[ACP] + NADP(+). It carries out the reaction (3R)-hydroxydecanoyl-[ACP] = (2E)-decenoyl-[ACP] + H2O. It catalyses the reaction (2E)-decenoyl-[ACP] + NADPH + H(+) = decanoyl-[ACP] + NADP(+). The enzyme catalyses decanoyl-[ACP] + malonyl-[ACP] + H(+) = 3-oxododecanoyl-[ACP] + holo-[ACP] + CO2. The catalysed reaction is 3-oxododecanoyl-[ACP] + NADPH + H(+) = (3R)-hydroxydodecanoyl-[ACP] + NADP(+). It carries out the reaction (3R)-hydroxydodecanoyl-[ACP] = (2E)-dodecenoyl-[ACP] + H2O. It catalyses the reaction (2E)-dodecenoyl-[ACP] + NADPH + H(+) = dodecanoyl-[ACP] + NADP(+). The enzyme catalyses dodecanoyl-[ACP] + malonyl-[ACP] + H(+) = 3-oxotetradecanoyl-[ACP] + holo-[ACP] + CO2. The catalysed reaction is 3-oxotetradecanoyl-[ACP] + NADPH + H(+) = (3R)-hydroxytetradecanoyl-[ACP] + NADP(+). It carries out the reaction (3R)-hydroxytetradecanoyl-[ACP] = (2E)-tetradecenoyl-[ACP] + H2O. It catalyses the reaction (2E)-tetradecenoyl-[ACP] + NADPH + H(+) = tetradecanoyl-[ACP] + NADP(+). The enzyme catalyses tetradecanoyl-[ACP] + malonyl-[ACP] + H(+) = 3-oxohexadecanoyl-[ACP] + holo-[ACP] + CO2. The catalysed reaction is 3-oxohexadecanoyl-[ACP] + NADPH + H(+) = (3R)-hydroxyhexadecanoyl-[ACP] + NADP(+). It carries out the reaction (3R)-hydroxyhexadecanoyl-[ACP] = (2E)-hexadecenoyl-[ACP] + H2O. It catalyses the reaction (2E)-hexadecenoyl-[ACP] + NADPH + H(+) = hexadecanoyl-[ACP] + NADP(+). The enzyme catalyses hexadecanoyl-[ACP] + malonyl-[ACP] + H(+) = 3-oxooctadecanoyl-[ACP] + holo-[ACP] + CO2. The catalysed reaction is 3-oxooctadecanoyl-[ACP] + NADPH + H(+) = (3R)-hydroxyoctadecanoyl-[ACP] + NADP(+). It carries out the reaction (3R)-hydroxyoctadecanoyl-[ACP] = (2E)-octadecenoyl-[ACP] + H2O. It catalyses the reaction (2E)-octadecenoyl-[ACP] + NADPH + H(+) = octadecanoyl-[ACP] + NADP(+). The enzyme catalyses tetradecanoyl-[ACP] + H2O = tetradecanoate + holo-[ACP] + H(+). The catalysed reaction is octadecanoyl-[ACP] + H2O = octadecanoate + holo-[ACP] + H(+). It participates in lipid metabolism; fatty acid biosynthesis. Its activity is regulated as follows. Cerulenin, a potent non-competitive pharmacological inhibitor of FAS, binds covalently to the active site of the condensing enzyme region, inactivating a key enzyme step in fatty acid synthesis. Another inhibitor, though less efficient, is C75, a member of the alpha-methylene-gamma-butyrolactone chemical class, also proposed as an antitumour and anti-obesity agent. Functionally, fatty acid synthetase is a multifunctional enzyme that catalyzes the de novo biosynthesis of long-chain saturated fatty acids starting from acetyl-CoA and malonyl-CoA in the presence of NADPH. This multifunctional protein contains 7 catalytic activities and a site for the binding of the prosthetic group 4'-phosphopantetheine of the acyl carrier protein ([ACP]) domain. The polypeptide is Fatty acid synthase (Fasn) (Rattus norvegicus (Rat)).